The chain runs to 573 residues: Isocitrate dehydrogenase kinase/phosphatase (573 aa).

ATP is bound by residues 317–323 (APGVRGM) and lysine 338. Aspartate 373 is an active-site residue.

It belongs to the AceK family.

The protein resides in the cytoplasm. It catalyses the reaction L-seryl-[isocitrate dehydrogenase] + ATP = O-phospho-L-seryl-[isocitrate dehydrogenase] + ADP + H(+). In terms of biological role, bifunctional enzyme which can phosphorylate or dephosphorylate isocitrate dehydrogenase (IDH) on a specific serine residue. This is a regulatory mechanism which enables bacteria to bypass the Krebs cycle via the glyoxylate shunt in response to the source of carbon. When bacteria are grown on glucose, IDH is fully active and unphosphorylated, but when grown on acetate or ethanol, the activity of IDH declines drastically concomitant with its phosphorylation. This chain is Isocitrate dehydrogenase kinase/phosphatase, found in Pseudomonas fluorescens (strain ATCC BAA-477 / NRRL B-23932 / Pf-5).